Reading from the N-terminus, the 933-residue chain is Dual 3',5'-cyclic-AMP and -GMP phosphodiesterase 11A (933 aa).

The interval 42–121 is disordered; sequence HTSGQGASSL…LQRRASQKEL (80 aa). Phosphoserine occurs at positions 162, 163, and 239. 2 consecutive GAF domains span residues 217–370 and 402–558; these read DLTS…GIAI and DLEK…GLGI. Position 424 (S424) interacts with 3',5'-cyclic GMP. In terms of domain architecture, PDEase spans 588-912; it reads SKAEVDKFKA…RKWEELHQKR (325 aa). H664 acts as the Proton donor in catalysis. Positions 668, 704, 705, and 816 each coordinate a divalent metal cation. The segment at 913–933 is disordered; it reads LQVSAASPDPASPMVAGEDRL.

This sequence belongs to the cyclic nucleotide phosphodiesterase family. A divalent metal cation serves as cofactor. In terms of tissue distribution, expressed in testis and developing spermatoza.

The protein resides in the cytoplasm. The protein localises to the cytosol. The enzyme catalyses 3',5'-cyclic GMP + H2O = GMP + H(+). It catalyses the reaction 3',5'-cyclic AMP + H2O = AMP + H(+). Its activity is regulated as follows. Inhibited by 3-isobutyl-1-methylxanthine (IBMX), zaprinast and dipyridamole. cGMP acts as an allosteric activator. In terms of biological role, plays a role in signal transduction by regulating the intracellular concentration of cyclic nucleotides cAMP and cGMP. Catalyzes the hydrolysis of both cAMP and cGMP to 5'-AMP and 5'-GMP, respectively. The polypeptide is Dual 3',5'-cyclic-AMP and -GMP phosphodiesterase 11A (Pde11a) (Mus musculus (Mouse)).